We begin with the raw amino-acid sequence, 353 residues long: Ig alpha-1 chain C region (353 aa).

The Ig-like 1 domain maps to 6 to 98; the sequence is PKVFPLSLCS…HYTNPSQDVT (93 aa). 2 cysteine pairs are disulfide-bonded: C26/C85 and C77/C101. Residues 96–121 are disordered; that stretch reads DVTVPCRVPSTPPTPSPSTPPTPSPP. Residues 105-121 show a composition bias toward pro residues; the sequence is STPPTPSPSTPPTPSPP. Cystine bridges form between C123-C180, C147-C204, and C250-C313. Ig-like domains are found at residues 125 to 220 and 228 to 330; these read PRLS…ATLS and PEVH…KTID. N-linked (GlcNAc...) asparagine glycosylation is present at N144. N-linked (GlcNAc...) asparagine glycosylation is present at N340. Residue C352 participates in 3-hydroxy-L-kynurenine binding.

In terms of assembly, monomeric or polymeric. 3-Hydroxykynurenine, an oxidized tryptophan metabolite that is common in biological fluids, reacts with alpha-1-microglobulin to form heterogeneous polycyclic chromophores including hydroxanthommatin. The chromophore reacts with accessible cysteines forming non-reducible thioether cross-links with Ig alpha-1 chain C region Cys-352.

Ig alpha is the major immunoglobulin class in body secretions. It may serve both to defend against local infection and to prevent access of foreign antigens to the general immunologic system. The chain is Ig alpha-1 chain C region (IGHA1) from Gorilla gorilla gorilla (Western lowland gorilla).